Reading from the N-terminus, the 395-residue chain is Phosphonoacetaldehyde reductase (395 aa).

Residues Asp-199, His-268, and His-282 each contribute to the Fe cation site.

It belongs to the iron-containing alcohol dehydrogenase family. Fe cation serves as cofactor.

It carries out the reaction 2-hydroxyethylphosphonate + NAD(+) = phosphonoacetaldehyde + NADH + H(+). Its pathway is secondary metabolite biosynthesis; bialaphos biosynthesis. Catalyzes the reduction of phosphonoacetaldehyde to 2-hydroxyethylphosphonate, a step in the biosynthesis of phosphinothricin tripeptide. Phosphinothricin tripeptide (PTT), also known as bialaphos (BA), is a natural-product antibiotic and potent herbicide. Can use both NAD and NADP but the preferred substrate is NAD. This chain is Phosphonoacetaldehyde reductase (phpC), found in Streptomyces viridochromogenes (strain DSM 40736 / JCM 4977 / BCRC 1201 / Tue 494).